The primary structure comprises 364 residues: tRNA/tmRNA (uracil-C(5))-methyltransferase (364 aa).

S-adenosyl-L-methionine-binding residues include glutamine 188, tyrosine 216, asparagine 221, glutamate 237, and aspartate 297. Residue cysteine 322 is the Nucleophile of the active site. Catalysis depends on glutamate 356, which acts as the Proton acceptor.

It belongs to the class I-like SAM-binding methyltransferase superfamily. RNA M5U methyltransferase family. TrmA subfamily.

The enzyme catalyses uridine(54) in tRNA + S-adenosyl-L-methionine = 5-methyluridine(54) in tRNA + S-adenosyl-L-homocysteine + H(+). The catalysed reaction is uridine(341) in tmRNA + S-adenosyl-L-methionine = 5-methyluridine(341) in tmRNA + S-adenosyl-L-homocysteine + H(+). In terms of biological role, dual-specificity methyltransferase that catalyzes the formation of 5-methyluridine at position 54 (m5U54) in all tRNAs, and that of position 341 (m5U341) in tmRNA (transfer-mRNA). In Teredinibacter turnerae (strain ATCC 39867 / T7901), this protein is tRNA/tmRNA (uracil-C(5))-methyltransferase.